The following is a 258-amino-acid chain: Hydroxyacylglutathione hydrolase (258 aa).

Positions 54, 56, 58, 59, 113, 138, and 176 each coordinate Zn(2+).

It belongs to the metallo-beta-lactamase superfamily. Glyoxalase II family. As to quaternary structure, monomer. The cofactor is Zn(2+).

The enzyme catalyses an S-(2-hydroxyacyl)glutathione + H2O = a 2-hydroxy carboxylate + glutathione + H(+). It participates in secondary metabolite metabolism; methylglyoxal degradation; (R)-lactate from methylglyoxal: step 2/2. Its function is as follows. Thiolesterase that catalyzes the hydrolysis of S-D-lactoyl-glutathione to form glutathione and D-lactic acid. This is Hydroxyacylglutathione hydrolase from Synechococcus sp. (strain ATCC 27144 / PCC 6301 / SAUG 1402/1) (Anacystis nidulans).